The following is a 1430-amino-acid chain: Gag-Pol polyprotein (1430 aa).

A lipid anchor (N-myristoyl glycine; by host) is attached at Gly-2. The interaction with Gp41 stretch occupies residues 7–31 (VLSGGKLDAWEKIRLRPGGKKKYRL). The tract at residues 8-43 (LSGGKLDAWEKIRLRPGGKKKYRLKHLVWASRELER) is interaction with host CALM1. The segment at 12 to 19 (KLDAWEKI) is interaction with host AP3D1. The tract at residues 14 to 33 (DAWEKIRLRPGGKKKYRLKH) is interaction with membrane phosphatidylinositol 4,5-bisphosphate and RNA. The Nuclear export signal motif lies at 16–22 (WEKIRLR). Positions 26-32 (KKKYRLK) match the Nuclear localization signal motif. The segment at 73-77 (EELKS) is interaction with membrane phosphatidylinositol 4,5-bisphosphate. Phosphotyrosine; by host is present on Tyr-128. An interaction with human PPIA/CYPA and NUP153 region spans residues 185–223 (NTVGGHQAAMQMLKDTINEEAAEWDRLHPTQAGPIPPGQ). Positions 273-359 (YSPVGILDIR…GGPSHKARVL (87 aa)) are dimerization/Multimerization of capsid protein p24. 2 CCHC-type zinc fingers span residues 385–402 (VKCFNCGKEGHIAKNCRA) and 406–423 (KGCWKCGREGHQMKDCTE). Positions 451–474 (VSPASRELQVRGGDNPISEAGAER) are disordered. The tract at residues 484 to 488 (PQITL) is dimerization of protease. The Peptidase A2 domain maps to 503–572 (KEALLDTGAD…TPVNIIGRNM (70 aa)). Asp-508 (for protease activity; shared with dimeric partner) is an active-site residue. 2 dimerization of protease regions span residues 532–538 (GIGGFIK) and 571–583 (NMLTQIGCTLHFP). Residues 626 to 816 (EGKISKIGPE…PPFLWMGYEL (191 aa)) form the Reverse transcriptase domain. Asp-692, Asp-767, and Asp-768 together coordinate Mg(2+). The RT 'primer grip' stretch occupies residues 809–817 (FLWMGYELH). A Tryptophan repeat motif motif is present at residues 980–996 (WDTWWTEYWQATWIPEW). An RNase H type-1 domain is found at 1016–1139 (IVGAETFYVD…VDKLVSAGIR (124 aa)). Asp-1025, Glu-1060, Asp-1080, and Asp-1131 together coordinate Mg(2+). Residues 1145–1186 (DGIDKAQEEHEKYHNNWRAMASDFNIPAVVAKEIVASCDKCQ) form an Integrase-type zinc finger. Residues His-1154, His-1158, Cys-1182, and Cys-1185 each contribute to the Zn(2+) site. The Integrase catalytic domain occupies 1196-1346 (VDCSPGIWQL…SAGERTIDII (151 aa)). Mg(2+) is bound by residues Asp-1206, Asp-1258, and Glu-1294. The segment at residues 1365–1412 (FRVYYRDSRDPVWKGPAKLLWKGEGAVVIQDNSEIKVVPRRKAKIIRD) is a DNA-binding region (integrase-type).

In terms of assembly, homotrimer; further assembles as hexamers of trimers. Interacts with gp41 (via C-terminus). Interacts with host CALM1; this interaction induces a conformational change in the Matrix protein, triggering exposure of the myristate group. Interacts with host AP3D1; this interaction allows the polyprotein trafficking to multivesicular bodies during virus assembly. Part of the pre-integration complex (PIC) which is composed of viral genome, matrix protein, Vpr and integrase. As to quaternary structure, homodimer; the homodimer further multimerizes as homohexamers or homopentamers. Interacts with human PPIA/CYPA; This interaction stabilizes the capsid. Interacts with human NUP153. Interacts with host PDZD8; this interaction stabilizes the capsid. Interacts with monkey TRIM5; this interaction destabilizes the capsid. Homodimer, whose active site consists of two apposed aspartic acid residues. In terms of assembly, heterodimer of p66 RT and p51 RT (RT p66/p51). Heterodimerization of RT is essential for DNA polymerase activity. The overall folding of the subdomains is similar in p66 RT and p51 RT but the spatial arrangements of the subdomains are dramatically different. As to quaternary structure, homotetramer; may further associate as a homohexadecamer. Part of the pre-integration complex (PIC) which is composed of viral genome, matrix protein, Vpr and integrase. Interacts with human SMARCB1/INI1 and human PSIP1/LEDGF isoform 1. Interacts with human KPNA3; this interaction might play a role in nuclear import of the pre-integration complex. Interacts with human NUP153; this interaction might play a role in nuclear import of the pre-integration complex. Mg(2+) is required as a cofactor. Specific enzymatic cleavages by the viral protease yield mature proteins. The protease is released by autocatalytic cleavage. The polyprotein is cleaved during and after budding, this process is termed maturation. Proteolytic cleavage of p66 RT removes the RNase H domain to yield the p51 RT subunit. Nucleocapsid protein p7 might be further cleaved after virus entry. Post-translationally, tyrosine phosphorylated presumably in the virion by a host kinase. Phosphorylation is apparently not a major regulator of membrane association. In terms of processing, phosphorylated possibly by host MAPK1; this phosphorylation is necessary for Pin1-mediated virion uncoating. Methylated by host PRMT6, impairing its function by reducing RNA annealing and the initiation of reverse transcription.

Its subcellular location is the host cell membrane. It localises to the host endosome. The protein resides in the host multivesicular body. It is found in the virion membrane. The protein localises to the host nucleus. Its subcellular location is the host cytoplasm. It localises to the virion. The catalysed reaction is Specific for a P1 residue that is hydrophobic, and P1' variable, but often Pro.. It carries out the reaction Endohydrolysis of RNA in RNA/DNA hybrids. Three different cleavage modes: 1. sequence-specific internal cleavage of RNA. Human immunodeficiency virus type 1 and Moloney murine leukemia virus enzymes prefer to cleave the RNA strand one nucleotide away from the RNA-DNA junction. 2. RNA 5'-end directed cleavage 13-19 nucleotides from the RNA end. 3. DNA 3'-end directed cleavage 15-20 nucleotides away from the primer terminus.. The enzyme catalyses 3'-end directed exonucleolytic cleavage of viral RNA-DNA hybrid.. It catalyses the reaction DNA(n) + a 2'-deoxyribonucleoside 5'-triphosphate = DNA(n+1) + diphosphate. Its activity is regulated as follows. Protease: The viral protease is inhibited by many synthetic protease inhibitors (PIs), such as amprenavir, atazanavir, indinavir, loprinavir, nelfinavir, ritonavir and saquinavir. Use of protease inhibitors in tritherapy regimens permit more ambitious therapeutic strategies. Reverse transcriptase/ribonuclease H: RT can be inhibited either by nucleoside RT inhibitors (NRTIs) or by non nucleoside RT inhibitors (NNRTIs). NRTIs act as chain terminators, whereas NNRTIs inhibit DNA polymerization by binding a small hydrophobic pocket near the RT active site and inducing an allosteric change in this region. Classical NRTIs are abacavir, adefovir (PMEA), didanosine (ddI), lamivudine (3TC), stavudine (d4T), tenofovir (PMPA), zalcitabine (ddC), and zidovudine (AZT). Classical NNRTIs are atevirdine (BHAP U-87201E), delavirdine, efavirenz (DMP-266), emivirine (I-EBU), and nevirapine (BI-RG-587). The tritherapies used as a basic effective treatment of AIDS associate two NRTIs and one NNRTI. Mediates, with Gag polyprotein, the essential events in virion assembly, including binding the plasma membrane, making the protein-protein interactions necessary to create spherical particles, recruiting the viral Env proteins, and packaging the genomic RNA via direct interactions with the RNA packaging sequence (Psi). Gag-Pol polyprotein may regulate its own translation, by the binding genomic RNA in the 5'-UTR. At low concentration, the polyprotein would promote translation, whereas at high concentration, the polyprotein would encapsidate genomic RNA and then shut off translation. Its function is as follows. Targets the polyprotein to the plasma membrane via a multipartite membrane-binding signal, that includes its myristoylated N-terminus. Matrix protein is part of the pre-integration complex. Implicated in the release from host cell mediated by Vpu. Binds to RNA. Functionally, forms the conical core that encapsulates the genomic RNA-nucleocapsid complex in the virion. Most core are conical, with only 7% tubular. The core is constituted by capsid protein hexamer subunits. The core is disassembled soon after virion entry. Host restriction factors such as TRIM5-alpha or TRIMCyp bind retroviral capsids and cause premature capsid disassembly, leading to blocks in reverse transcription. Capsid restriction by TRIM5 is one of the factors which restricts HIV-1 to the human species. Host PIN1 apparently facilitates the virion uncoating. On the other hand, interactions with PDZD8 or CYPA stabilize the capsid. In terms of biological role, encapsulates and protects viral dimeric unspliced genomic RNA (gRNA). Binds these RNAs through its zinc fingers. Acts as a nucleic acid chaperone which is involved in rearangement of nucleic acid secondary structure during gRNA retrotranscription. Also facilitates template switch leading to recombination. As part of the polyprotein, participates in gRNA dimerization, packaging, tRNA incorporation and virion assembly. Aspartyl protease that mediates proteolytic cleavages of Gag and Gag-Pol polyproteins during or shortly after the release of the virion from the plasma membrane. Cleavages take place as an ordered, step-wise cascade to yield mature proteins. This process is called maturation. Displays maximal activity during the budding process just prior to particle release from the cell. Also cleaves Nef and Vif, probably concomitantly with viral structural proteins on maturation of virus particles. Hydrolyzes host EIF4GI and PABP1 in order to shut off the capped cellular mRNA translation. The resulting inhibition of cellular protein synthesis serves to ensure maximal viral gene expression and to evade host immune response. Also mediates cleavage of host YTHDF3. Mediates cleavage of host CARD8, thereby activating the CARD8 inflammasome, leading to the clearance of latent HIV-1 in patient CD4(+) T-cells after viral reactivation; in contrast, HIV-1 can evade CARD8-sensing when its protease remains inactive in infected cells prior to viral budding. Its function is as follows. Multifunctional enzyme that converts the viral RNA genome into dsDNA in the cytoplasm, shortly after virus entry into the cell. This enzyme displays a DNA polymerase activity that can copy either DNA or RNA templates, and a ribonuclease H (RNase H) activity that cleaves the RNA strand of RNA-DNA heteroduplexes in a partially processive 3' to 5' endonucleasic mode. Conversion of viral genomic RNA into dsDNA requires many steps. A tRNA(3)-Lys binds to the primer-binding site (PBS) situated at the 5'-end of the viral RNA. RT uses the 3' end of the tRNA primer to perform a short round of RNA-dependent minus-strand DNA synthesis. The reading proceeds through the U5 region and ends after the repeated (R) region which is present at both ends of viral RNA. The portion of the RNA-DNA heteroduplex is digested by the RNase H, resulting in a ssDNA product attached to the tRNA primer. This ssDNA/tRNA hybridizes with the identical R region situated at the 3' end of viral RNA. This template exchange, known as minus-strand DNA strong stop transfer, can be either intra- or intermolecular. RT uses the 3' end of this newly synthesized short ssDNA to perform the RNA-dependent minus-strand DNA synthesis of the whole template. RNase H digests the RNA template except for two polypurine tracts (PPTs) situated at the 5'-end and near the center of the genome. It is not clear if both polymerase and RNase H activities are simultaneous. RNase H probably can proceed both in a polymerase-dependent (RNA cut into small fragments by the same RT performing DNA synthesis) and a polymerase-independent mode (cleavage of remaining RNA fragments by free RTs). Secondly, RT performs DNA-directed plus-strand DNA synthesis using the PPTs that have not been removed by RNase H as primers. PPTs and tRNA primers are then removed by RNase H. The 3' and 5' ssDNA PBS regions hybridize to form a circular dsDNA intermediate. Strand displacement synthesis by RT to the PBS and PPT ends produces a blunt ended, linear dsDNA copy of the viral genome that includes long terminal repeats (LTRs) at both ends. Functionally, integrase catalyzes viral DNA integration into the host chromosome, by performing a series of DNA cutting and joining reactions. This enzyme activity takes place after virion entry into a cell and reverse transcription of the RNA genome in dsDNA. The first step in the integration process is 3' processing. This step requires a complex comprising the viral genome, matrix protein, Vpr and integrase. This complex is called the pre-integration complex (PIC). The integrase protein removes 2 nucleotides from each 3' end of the viral DNA, leaving recessed CA OH's at the 3' ends. In the second step, the PIC enters cell nucleus. This process is mediated through integrase and Vpr proteins, and allows the virus to infect a non dividing cell. This ability to enter the nucleus is specific of lentiviruses, other retroviruses cannot and rely on cell division to access cell chromosomes. In the third step, termed strand transfer, the integrase protein joins the previously processed 3' ends to the 5' ends of strands of target cellular DNA at the site of integration. The 5'-ends are produced by integrase-catalyzed staggered cuts, 5 bp apart. A Y-shaped, gapped, recombination intermediate results, with the 5'-ends of the viral DNA strands and the 3' ends of target DNA strands remaining unjoined, flanking a gap of 5 bp. The last step is viral DNA integration into host chromosome. This involves host DNA repair synthesis in which the 5 bp gaps between the unjoined strands are filled in and then ligated. Since this process occurs at both cuts flanking the HIV genome, a 5 bp duplication of host DNA is produced at the ends of HIV-1 integration. Alternatively, Integrase may catalyze the excision of viral DNA just after strand transfer, this is termed disintegration. This Homo sapiens (Human) protein is Gag-Pol polyprotein (gag-pol).